The following is a 209-amino-acid chain: COP9 signalosome complex subunit 8 (209 aa).

The 172-residue stretch at 8–179 (ESAFSFKKLL…GALDVSFNKF (172 aa)) folds into the PCI domain. Phosphoserine is present on Ser-175.

Belongs to the CSN8 family. As to quaternary structure, component of the CSN complex, composed of COPS1/GPS1, COPS2, COPS3, COPS4, COPS5, COPS6, COPS7 (COPS7A or COPS7B), COPS8 and COPS9. In the complex, it probably interacts directly with COPS3, COPS4 and COPS7 (COPS7A or COPS7B).

The protein localises to the cytoplasm. It is found in the nucleus. Functionally, component of the COP9 signalosome complex (CSN), a complex involved in various cellular and developmental processes. The CSN complex is an essential regulator of the ubiquitin (Ubl) conjugation pathway by mediating the deneddylation of the cullin subunits of SCF-type E3 ligase complexes, leading to decrease the Ubl ligase activity of SCF-type complexes such as SCF, CSA or DDB2. The complex is also involved in phosphorylation of p53/TP53, c-jun/JUN, IkappaBalpha/NFKBIA, ITPK1 and IRF8/ICSBP, possibly via its association with CK2 and PKD kinases. CSN-dependent phosphorylation of TP53 and JUN promotes and protects degradation by the Ubl system, respectively. The protein is COP9 signalosome complex subunit 8 (COPS8) of Pongo abelii (Sumatran orangutan).